The primary structure comprises 53 residues: UPF0391 membrane protein Patl_1732 (53 aa).

The next 2 helical transmembrane spans lie at 4 to 24 (WAVI…GGIA) and 28 to 48 (AGIA…SVVM).

This sequence belongs to the UPF0391 family.

The protein localises to the cell membrane. This Pseudoalteromonas atlantica (strain T6c / ATCC BAA-1087) protein is UPF0391 membrane protein Patl_1732.